Here is a 195-residue protein sequence, read N- to C-terminus: Nucleoid occlusion factor SlmA (195 aa).

The HTH tetR-type domain occupies 6 to 66; it reads PSRRESILQA…ALIEFAEEAV (61 aa). Positions 29-48 form a DNA-binding region, H-T-H motif; the sequence is TTAGLAKTVGVTEAALYRHF. Residues 118-138 are a coiled coil; that stretch reads RKRASQFFERLETQIRQALKE.

It belongs to the nucleoid occlusion factor SlmA family. In terms of assembly, homodimer. Interacts with FtsZ.

It is found in the cytoplasm. It localises to the nucleoid. In terms of biological role, required for nucleoid occlusion (NO) phenomenon, which prevents Z-ring formation and cell division over the nucleoid. Acts as a DNA-associated cell division inhibitor that binds simultaneously chromosomal DNA and FtsZ, and disrupts the assembly of FtsZ polymers. SlmA-DNA-binding sequences (SBS) are dispersed on non-Ter regions of the chromosome, preventing FtsZ polymerization at these regions. The polypeptide is Nucleoid occlusion factor SlmA (Marinobacter nauticus (strain ATCC 700491 / DSM 11845 / VT8) (Marinobacter aquaeolei)).